A 26-amino-acid polypeptide reads, in one-letter code: Potassium channel toxin alpha-KTx6 OcyKTx1 (26 aa).

Cysteines 3 and 24 form a disulfide.

The protein belongs to the short scorpion toxin superfamily. Potassium channel inhibitor family. Alpha-KTx 06 subfamily. In terms of tissue distribution, expressed by the venom gland.

The protein localises to the secreted. Its function is as follows. Blocks voltage-gated potassium channels. The protein is Potassium channel toxin alpha-KTx6 OcyKTx1 of Opisthacanthus cayaporum (South American scorpion).